The sequence spans 269 residues: 3-methyl-2-oxobutanoate hydroxymethyltransferase (269 aa).

Mg(2+) is bound by residues Asp-48 and Asp-87. 3-methyl-2-oxobutanoate is bound by residues 48–49 (DS), Asp-87, and Lys-117. A Mg(2+)-binding site is contributed by Glu-119. Glu-186 acts as the Proton acceptor in catalysis.

It belongs to the PanB family. In terms of assembly, homodecamer; pentamer of dimers. Mg(2+) is required as a cofactor.

The protein localises to the cytoplasm. It catalyses the reaction 3-methyl-2-oxobutanoate + (6R)-5,10-methylene-5,6,7,8-tetrahydrofolate + H2O = 2-dehydropantoate + (6S)-5,6,7,8-tetrahydrofolate. Its pathway is cofactor biosynthesis; (R)-pantothenate biosynthesis; (R)-pantoate from 3-methyl-2-oxobutanoate: step 1/2. Catalyzes the reversible reaction in which hydroxymethyl group from 5,10-methylenetetrahydrofolate is transferred onto alpha-ketoisovalerate to form ketopantoate. This chain is 3-methyl-2-oxobutanoate hydroxymethyltransferase, found in Moorella thermoacetica (strain ATCC 39073 / JCM 9320).